A 317-amino-acid polypeptide reads, in one-letter code: Acetyl-coenzyme A carboxylase carboxyl transferase subunit alpha (317 aa).

In terms of domain architecture, CoA carboxyltransferase C-terminal spans 37–292 (RLEKKAEKLR…RICLKKHLDD (256 aa)).

Belongs to the AccA family. In terms of assembly, acetyl-CoA carboxylase is a heterohexamer composed of biotin carboxyl carrier protein (AccB), biotin carboxylase (AccC) and two subunits each of ACCase subunit alpha (AccA) and ACCase subunit beta (AccD).

It is found in the cytoplasm. The enzyme catalyses N(6)-carboxybiotinyl-L-lysyl-[protein] + acetyl-CoA = N(6)-biotinyl-L-lysyl-[protein] + malonyl-CoA. It functions in the pathway lipid metabolism; malonyl-CoA biosynthesis; malonyl-CoA from acetyl-CoA: step 1/1. Its function is as follows. Component of the acetyl coenzyme A carboxylase (ACC) complex. First, biotin carboxylase catalyzes the carboxylation of biotin on its carrier protein (BCCP) and then the CO(2) group is transferred by the carboxyltransferase to acetyl-CoA to form malonyl-CoA. The chain is Acetyl-coenzyme A carboxylase carboxyl transferase subunit alpha from Syntrophotalea carbinolica (strain DSM 2380 / NBRC 103641 / GraBd1) (Pelobacter carbinolicus).